The chain runs to 104 residues: DNA-directed RNA polymerase subunit omega (104 aa).

Belongs to the RNA polymerase subunit omega family. The RNAP catalytic core consists of 2 alpha, 1 beta, 1 beta' and 1 omega subunit. When a sigma factor is associated with the core the holoenzyme is formed, which can initiate transcription.

It carries out the reaction RNA(n) + a ribonucleoside 5'-triphosphate = RNA(n+1) + diphosphate. Promotes RNA polymerase assembly. Latches the N- and C-terminal regions of the beta' subunit thereby facilitating its interaction with the beta and alpha subunits. In Streptococcus suis (strain 05ZYH33), this protein is DNA-directed RNA polymerase subunit omega.